Here is a 62-residue protein sequence, read N- to C-terminus: Large ribosomal subunit protein eL24 (62 aa).

Zn(2+)-binding residues include Cys7, Cys10, Cys33, and Cys37. The segment at 7–37 adopts a C4-type zinc-finger fold; the sequence is CSFCGREIEPGTGIMYVKNDGSILWFCSRKC.

The protein belongs to the eukaryotic ribosomal protein eL24 family. In terms of assembly, part of the 50S ribosomal subunit. Forms a cluster with proteins L3 and L14. Zn(2+) is required as a cofactor.

In terms of biological role, binds to the 23S rRNA. The chain is Large ribosomal subunit protein eL24 from Staphylothermus marinus (strain ATCC 43588 / DSM 3639 / JCM 9404 / F1).